The following is a 237-amino-acid chain: Uridylate kinase (237 aa).

Residue 10–13 participates in ATP binding; it reads KLSG. G51 serves as a coordination point for UMP. Residues G52 and R56 each coordinate ATP. Residues D71 and 132–139 each bind UMP; that span reads MGMPFFST. N160, Y166, and D169 together coordinate ATP.

The protein belongs to the UMP kinase family. Homohexamer.

It is found in the cytoplasm. The enzyme catalyses UMP + ATP = UDP + ADP. It functions in the pathway pyrimidine metabolism; CTP biosynthesis via de novo pathway; UDP from UMP (UMPK route): step 1/1. With respect to regulation, inhibited by UTP. Functionally, catalyzes the reversible phosphorylation of UMP to UDP. This is Uridylate kinase from Nocardioides sp. (strain ATCC BAA-499 / JS614).